We begin with the raw amino-acid sequence, 692 residues long: Elongation factor G (692 aa).

The 275-residue stretch at 8–282 (ENTRNIGIMA…AVIDYLPSPL (275 aa)) folds into the tr-type G domain. GTP-binding positions include 17-24 (AHIDAGKT), 81-85 (DTPGH), and 135-138 (NKMD).

The protein belongs to the TRAFAC class translation factor GTPase superfamily. Classic translation factor GTPase family. EF-G/EF-2 subfamily.

It localises to the cytoplasm. Functionally, catalyzes the GTP-dependent ribosomal translocation step during translation elongation. During this step, the ribosome changes from the pre-translocational (PRE) to the post-translocational (POST) state as the newly formed A-site-bound peptidyl-tRNA and P-site-bound deacylated tRNA move to the P and E sites, respectively. Catalyzes the coordinated movement of the two tRNA molecules, the mRNA and conformational changes in the ribosome. In Bacillus anthracis (strain CDC 684 / NRRL 3495), this protein is Elongation factor G.